The chain runs to 598 residues: Replication protein E1 (598 aa).

The Nuclear localization signal motif lies at 76-78 (KRK). A phosphoserine; by host mark is found at Ser-82 and Ser-91. The short motif at 90-99 (LSPQLQAVKI) is the Nuclear export signal element. Positions 138–302 (SQDGGGDINL…LVSHQAATTA (165 aa)) are DNA-binding region. The SF3 helicase domain maps to 401-551 (VNILSFLIVL…MPFLDDGSPM (151 aa)). 427-434 (GPPDTGKS) serves as a coordination point for ATP. Lys-508 is covalently cross-linked (Glycyl lysine isopeptide (Lys-Gly) (interchain with G-Cter in SUMO)). The disordered stretch occupies residues 573-598 (TDPEEESNGVPSRAFRCTSRSNSDSY).

Belongs to the papillomaviridae E1 protein family. In terms of assembly, can form hexamers. Interacts with E2 protein; this interaction increases E1 DNA binding specificity. Interacts with host DNA polymerase subunit POLA2. Interacts with host single stranded DNA-binding protein RPA1. Interacts with host TOP1; this interaction stimulates the enzymatic activity of TOP1. Phosphorylated. In terms of processing, sumoylated.

It is found in the host nucleus. It carries out the reaction Couples ATP hydrolysis with the unwinding of duplex DNA by translocating in the 3'-5' direction.. It catalyses the reaction ATP + H2O = ADP + phosphate + H(+). ATP-dependent DNA 3'-5' helicase required for initiation of viral DNA replication. It forms a complex with the viral E2 protein. The E1-E2 complex binds to the replication origin which contains binding sites for both proteins. During the initial step, a dimer of E1 interacts with a dimer of protein E2 leading to a complex that binds the viral origin of replication with high specificity. Then, a second dimer of E1 displaces the E2 dimer in an ATP-dependent manner to form the E1 tetramer. Following this, two E1 monomers are added to each half of the site, which results in the formation of two E1 trimers on the viral ori. Subsequently, two hexamers will be created. The double hexamer acts as a bi-directional helicase machinery and unwinds the viral DNA and then recruits the host DNA polymerase to start replication. The chain is Replication protein E1 from Human papillomavirus 65.